A 947-amino-acid polypeptide reads, in one-letter code: Protein translocase subunit SecA (947 aa).

Residues Gln87, 105–109 (GEGKT), and Asp525 contribute to the ATP site. Residues 905 to 928 (PADNADKTARNPNDPSTWGKVGRN) form a disordered region. Residues Cys931, Cys933, Cys942, and His943 each contribute to the Zn(2+) site.

It belongs to the SecA family. As to quaternary structure, monomer and homodimer. Part of the essential Sec protein translocation apparatus which comprises SecA, SecYEG and auxiliary proteins SecDF-YajC and YidC. Requires Zn(2+) as cofactor.

Its subcellular location is the cell inner membrane. It localises to the cytoplasm. The catalysed reaction is ATP + H2O + cellular proteinSide 1 = ADP + phosphate + cellular proteinSide 2.. Part of the Sec protein translocase complex. Interacts with the SecYEG preprotein conducting channel. Has a central role in coupling the hydrolysis of ATP to the transfer of proteins into and across the cell membrane, serving both as a receptor for the preprotein-SecB complex and as an ATP-driven molecular motor driving the stepwise translocation of polypeptide chains across the membrane. The sequence is that of Protein translocase subunit SecA from Rhodopseudomonas palustris (strain BisB18).